The chain runs to 689 residues: Glycine--tRNA ligase beta subunit (689 aa).

Belongs to the class-II aminoacyl-tRNA synthetase family. In terms of assembly, tetramer of two alpha and two beta subunits.

It is found in the cytoplasm. The catalysed reaction is tRNA(Gly) + glycine + ATP = glycyl-tRNA(Gly) + AMP + diphosphate. This is Glycine--tRNA ligase beta subunit from Dichelobacter nodosus (strain VCS1703A).